Reading from the N-terminus, the 103-residue chain is Putative truncated guanine nucleotide exchange factor YLL017W (103 aa).

The SH3 domain maps to 26–97 (QPIDVVECTY…PPSFYTVHSK (72 aa)).

In Saccharomyces cerevisiae (strain ATCC 204508 / S288c) (Baker's yeast), this protein is Putative truncated guanine nucleotide exchange factor YLL017W.